Here is a 60-residue protein sequence, read N- to C-terminus: Potassium channel toxin MeuTXKalpha3 (60 aa).

Residues 1-22 form the signal peptide; that stretch reads MKNYCGIITLFLAIISATGVFC. 3 disulfide bridges follow: Cys32–Cys50, Cys37–Cys55, and Cys41–Cys57. Pro59 carries the proline amide modification.

This sequence belongs to the short scorpion toxin superfamily. Potassium channel inhibitor family. Expressed by the venom gland.

It is found in the secreted. Its function is as follows. May block voltage-gated potassium channels (Kv). The chain is Potassium channel toxin MeuTXKalpha3 from Mesobuthus eupeus (Lesser Asian scorpion).